The primary structure comprises 242 residues: MSGFFITATDTEVGKTVVAGALAGVFRELGYNIGVYKALQSGHVASNPEGDAARLKVLSGVPTKEDEICPYSIEEPLAPRLAMKRAGRAVTLKDIIHHYNERLKEFNSLFVEGAGGLAVPYTEDALVIDFAKELQLPLIVVARPTLGTVNHTVLTIAYAKAHGLTVAGVILSGCKECEMERVQENKVMIEELSGVPVLGLLPFFEGEFTKEEVLESAKEYIMISKLEEFIRNESTVAHTSSN.

12-17 (EVGKTV) contributes to the ATP binding site. Thr16 contributes to the Mg(2+) binding site. Lys37 is an active-site residue. A substrate-binding site is contributed by Ser41. Residues Asp51 and 112 to 115 (EGAG) each bind ATP. Positions 51 and 112 each coordinate Mg(2+).

Belongs to the dethiobiotin synthetase family. As to quaternary structure, homodimer. Mg(2+) is required as a cofactor.

It localises to the cytoplasm. The enzyme catalyses (7R,8S)-7,8-diammoniononanoate + CO2 + ATP = (4R,5S)-dethiobiotin + ADP + phosphate + 3 H(+). It functions in the pathway cofactor biosynthesis; biotin biosynthesis; biotin from 7,8-diaminononanoate: step 1/2. Catalyzes a mechanistically unusual reaction, the ATP-dependent insertion of CO2 between the N7 and N8 nitrogen atoms of 7,8-diaminopelargonic acid (DAPA, also called 7,8-diammoniononanoate) to form a ureido ring. This Bacillus cereus (strain AH820) protein is ATP-dependent dethiobiotin synthetase BioD.